The sequence spans 635 residues: MISIRLKDGSQREYPEGISLLQVAEDISPKLAKNAMAAVFNGKISDLNSQVKEDGCLELLDFEDERAREVYRHSSAHVMAQAVKRLWPESKLAIGPAIDKGFYYDFDSGHTFTPEDFAAIEEEMKRIIKADYPIVRKELSREEALQFFSERSEDYKLELIEDLPEDAVISTYQQGEFVDLCAGPHLPSTGRLKAIKVMSLAGAYWRGSERNPMLQRVYATSFPKKSMLDDYLQKLEEAKKRDHRRLGRELGLFVVLDEGPGFPFFLPKGMVLRNELENFWREEHRKAGYQEIRTPIILSRELWERSGHWDHYKDNMYFTTIDEGDYAIKPMNCPGGLLVYKQNLHSYKELPLRMGEMGLVHRHEMSGVLHGLMRVRAFTQDDAHIFMLPEQIIDEIKGVMDLVDRFYSLFGFPYHVELSTKPEKAMGSDEIWEVATNALIKALEERGMEYKVNEGDGAFYGPKIDFHLQDSLDRTWQCGTIQLDFQMPEKFDLTYVGEDGGKHRPVMIHRVIYGSIERFIGILTEHFGGAFPLWLAPVQVRVLPITQRSQDYARQVVAELEQAGIRVEADFRSEKIGYKIREGQLQKIPYLLVLGDREAEEGTVSVRHRKEGDLGAKLLEEFKQTIVKEIKDKVL.

A TGS domain is found at 1–61; the sequence is MISIRLKDGS…KEDGCLELLD (61 aa). The catalytic stretch occupies residues 242-532; the sequence is DHRRLGRELG…LTEHFGGAFP (291 aa). Zn(2+) contacts are provided by cysteine 333, histidine 384, and histidine 509.

It belongs to the class-II aminoacyl-tRNA synthetase family. In terms of assembly, homodimer. Requires Zn(2+) as cofactor.

Its subcellular location is the cytoplasm. It catalyses the reaction tRNA(Thr) + L-threonine + ATP = L-threonyl-tRNA(Thr) + AMP + diphosphate + H(+). Its function is as follows. Catalyzes the attachment of threonine to tRNA(Thr) in a two-step reaction: L-threonine is first activated by ATP to form Thr-AMP and then transferred to the acceptor end of tRNA(Thr). Also edits incorrectly charged L-seryl-tRNA(Thr). This is Threonine--tRNA ligase from Syntrophomonas wolfei subsp. wolfei (strain DSM 2245B / Goettingen).